The primary structure comprises 330 residues: Polyprenal reductase (330 aa).

The Cytoplasmic segment spans residues 1-16 (MAGWAGFELSALNPLR). A helical membrane pass occupies residues 17–37 (TLWLALAAAFLFALLLQLAPA). The Lumenal segment spans residues 38–80 (RLLPSCALFQDLLRYGKTKQSGSRRPAVCRAFDVPKRYFSHFY). A helical transmembrane segment spans residues 81-101 (VISVVWNGSLLWLLSQSLFLG). Residues 102–132 (APFPNWLSALLRTLGATQFQALEMESKASRM) are Cytoplasmic-facing. A helical transmembrane segment spans residues 133–153 (PAAELALSAFLVLVFLWVHSL). Topologically, residues 154–169 (RRLFECFYVSVFSNAA) are lumenal. Residues 170 to 190 (IHVVQYCFGLVYYVLVGLTVL) form a helical membrane-spanning segment. The Cytoplasmic portion of the chain corresponds to 191–206 (SQVPMDDKNVYVLGKN). The helical transmembrane segment at 207-227 (LLIQARWFHILGMVMFFWSSA) threads the bilayer. The Lumenal portion of the chain corresponds to 228–277 (HQYKCHVILSNLRRNKKGVVIHCQHRIPFGDWFEYVSSANYLAELMIYIS). The chain crosses the membrane as a helical span at residues 278 to 298 (MAVTFGLHNLTWWLVVTYVFS). The Cytoplasmic segment spans residues 299 to 330 (SQALSAFFNHKFYRSTFVSYPKHRKAFLPFLF).

This sequence belongs to the steroid 5-alpha reductase family. Polyprenal reductase subfamily.

It localises to the endoplasmic reticulum membrane. The catalysed reaction is a di-trans,poly-cis-dolichal + NADP(+) = a di-trans,poly-cis-polyprenal + NADPH + H(+). It catalyses the reaction a 3-oxo-5alpha-steroid + NADP(+) = a 3-oxo-Delta(4)-steroid + NADPH + H(+). The enzyme catalyses androst-4-ene-3,17-dione + NADPH + H(+) = 5alpha-androstan-3,17-dione + NADP(+). It carries out the reaction 17beta-hydroxy-5alpha-androstan-3-one + NADP(+) = testosterone + NADPH + H(+). Its pathway is protein modification; protein glycosylation. Its function is as follows. Plays a key role in early steps of protein N-linked glycosylation by being involved in the conversion of polyprenol into dolichol. Acts as a polyprenal reductase that mediates the reduction of polyprenal into dolichal in a NADP-dependent mechanism. Dolichols are required for the synthesis of dolichol-linked monosaccharides and the oligosaccharide precursor used for N-glycosylation. Also able to convert testosterone (T) into 5-alpha-dihydrotestosterone (DHT). The polypeptide is Polyprenal reductase (Mus musculus (Mouse)).